The chain runs to 62 residues: Calmodulin regulator protein PCP4 (62 aa).

The interval 1–40 is disordered; that stretch reads MSERQGAGTTNGKDKPSGENDGQKKVQEEFDIDMDAPETE. Residues 12-28 are compositionally biased toward basic and acidic residues; the sequence is GKDKPSGENDGQKKVQE. The tract at residues 28-40 is acidic; binds calcium and is required for modulating the calcium-binding kinetics of calmodulin; sequence EEFDIDMDAPETE. The IQ domain maps to 39 to 62; the sequence is TERAAVAIQSQFRKFQKKKAGSQS.

The protein belongs to the PCP4 family. As to quaternary structure, binds to both calcium-free and calcium-bound calmodulin. The affinity for the calcium-bound form is 50-fold greater.

Functionally, functions as a modulator of calcium-binding by calmodulin. Thereby, regulates calmodulin activity and the different processes it controls. For instance, may play a role in neuronal differentiation through activation of calmodulin-dependent kinase signaling pathways. The polypeptide is Calmodulin regulator protein PCP4 (Bos taurus (Bovine)).